The following is a 1412-amino-acid chain: DNA-directed RNA polymerase subunit beta (1412 aa).

It belongs to the RNA polymerase beta chain family. The RNAP catalytic core consists of 2 alpha, 1 beta, 1 beta' and 1 omega subunit. When a sigma factor is associated with the core the holoenzyme is formed, which can initiate transcription.

The catalysed reaction is RNA(n) + a ribonucleoside 5'-triphosphate = RNA(n+1) + diphosphate. In terms of biological role, DNA-dependent RNA polymerase catalyzes the transcription of DNA into RNA using the four ribonucleoside triphosphates as substrates. The protein is DNA-directed RNA polymerase subunit beta of Bdellovibrio bacteriovorus (strain ATCC 15356 / DSM 50701 / NCIMB 9529 / HD100).